Consider the following 259-residue polypeptide: Thiazole synthase (259 aa).

Lys-99 serves as the catalytic Schiff-base intermediate with DXP. 1-deoxy-D-xylulose 5-phosphate contacts are provided by residues Gly-160, 186–187, and 208–209; these read AG and NT.

It belongs to the ThiG family. As to quaternary structure, homotetramer. Forms heterodimers with either ThiH or ThiS.

It is found in the cytoplasm. The catalysed reaction is [ThiS sulfur-carrier protein]-C-terminal-Gly-aminoethanethioate + 2-iminoacetate + 1-deoxy-D-xylulose 5-phosphate = [ThiS sulfur-carrier protein]-C-terminal Gly-Gly + 2-[(2R,5Z)-2-carboxy-4-methylthiazol-5(2H)-ylidene]ethyl phosphate + 2 H2O + H(+). It functions in the pathway cofactor biosynthesis; thiamine diphosphate biosynthesis. Its function is as follows. Catalyzes the rearrangement of 1-deoxy-D-xylulose 5-phosphate (DXP) to produce the thiazole phosphate moiety of thiamine. Sulfur is provided by the thiocarboxylate moiety of the carrier protein ThiS. In vitro, sulfur can be provided by H(2)S. In Porphyromonas gingivalis (strain ATCC BAA-308 / W83), this protein is Thiazole synthase.